The sequence spans 375 residues: G-protein coupled estrogen receptor 1 (375 aa).

The residue at position 1 (Met-1) is an N-acetylmethionine. At 1–62 the chain is on the extracellular side; it reads MDATTPAQTV…QQYVIALFLS (62 aa). N-linked (GlcNAc...) asparagine glycans are attached at residues Asn-32 and Asn-44. Residues 63 to 84 form a helical membrane-spanning segment; the sequence is CLYTIFLFPIGFVGNILILVVN. At 85-96 the chain is on the cytoplasmic side; the sequence is ISFREKMTIPDL. A helical membrane pass occupies residues 97–120; sequence YFINLAAADLILVADSLIEVFNLD. Topologically, residues 121-132 are extracellular; that stretch reads EQYYDIAVLCTF. Residues Cys-130 and Cys-207 are joined by a disulfide bond. A helical membrane pass occupies residues 133-153; it reads MSLFLQINMYSSVFFLTWMSF. The Cytoplasmic segment spans residues 154–175; that stretch reads DRYLALAKAMRCGLFRTKHHAR. The chain crosses the membrane as a helical span at residues 176-194; it reads LSCGLIWMASVSATLVPFT. Topologically, residues 195–220 are extracellular; it reads AVHLRHTEEACFCFADVREVQWLEVT. Residues 221–236 traverse the membrane as a helical segment; that stretch reads LGFIMPFAIIGLCYSL. At 237-259 the chain is on the cytoplasmic side; that stretch reads IVRALIRAHRHRGLRPRRQKALR. A helical transmembrane segment spans residues 260–280; sequence MIFAVVLVFFICWLPENVFIS. Residues 281 to 306 lie on the Extracellular side of the membrane; that stretch reads VHLLQWTQPGDTPCKQSFRHAYPLTG. A helical membrane pass occupies residues 307 to 327; it reads HIVNLAAFSNSCLNPLIYSFL. Residues 328-375 are Cytoplasmic-facing; the sequence is GETFRDKLRLYVEQKTSLPALNRFCHATLKAVIPDSTEQSEVRFSSAV.

Belongs to the G-protein coupled receptor 1 family. Interacts with RAMP3; the interaction confers proper subcellular localization and function in cardioprotection. Interacts with KRT7 and KRT8. Interacts with EGFR; the interaction increases after agonist-induced stimulation in cancer-associated fibroblasts (CAF). Interacts with EGFR and ESR1. Interacts (via C-terminus tail motif) with DLG4 (via N-terminus tandem pair of PDZ domains); the interaction is direct and induces the increase of GPER1 protein levels residing at the plasma membrane surface in a estradiol-independent manner. Homodimer. Heterodimer; heterodimerizes with other G-protein-coupled receptor (GPCRs) like CRHR1, HTR1A and PAQR8. Ubiquitinated; ubiquitination occurs at the plasma membrane and leads to proteasome-mediated degradation. Post-translationally, N-glycosylated. As to expression, expressed in brain, heart, spleen, preadipocytes, mature adipocytes and primary hippocampal neurons. Expressed in neurons of the hippocampus, hypothalamic paraventricular nucleus (PVH), supraoptic nucleus (SON) and the median eminence. Expressed in the nucleus ambiguous (at protein level). Expressed in brain, pituitary gland, adrenal medulla, renal pelvis, ovary, endothelial cells, visceral fat tissues and islets of Langerhans.

It is found in the nucleus. It localises to the cytoplasm. The protein resides in the perinuclear region. Its subcellular location is the cytoskeleton. The protein localises to the cell membrane. It is found in the endoplasmic reticulum membrane. It localises to the golgi apparatus membrane. The protein resides in the cell projection. Its subcellular location is the dendrite. The protein localises to the cytoplasmic vesicle membrane. It is found in the early endosome. It localises to the recycling endosome. The protein resides in the golgi apparatus. Its subcellular location is the trans-Golgi network. The protein localises to the dendritic spine membrane. It is found in the axon. It localises to the postsynaptic density. The protein resides in the mitochondrion membrane. Functionally, G-protein coupled estrogen receptor that binds to 17-beta-estradiol (E2) with high affinity, leading to rapid and transient activation of numerous intracellular signaling pathways. Stimulates cAMP production, calcium mobilization and tyrosine kinase Src inducing the release of heparin-bound epidermal growth factor (HB-EGF) and subsequent transactivation of the epidermal growth factor receptor (EGFR), activating downstream signaling pathways such as PI3K/Akt and ERK/MAPK. Mediates pleiotropic functions among others in the cardiovascular, endocrine, reproductive, immune and central nervous systems. Has a role in cardioprotection by reducing cardiac hypertrophy and perivascular fibrosis in a RAMP3-dependent manner. Regulates arterial blood pressure by stimulating vasodilation and reducing vascular smooth muscle and microvascular endothelial cell proliferation. Plays a role in blood glucose homeostasis contributing to the insulin secretion response by pancreatic beta cells. Triggers mitochondrial apoptosis during pachytene spermatocyte differentiation. Stimulates uterine epithelial cell proliferation. Enhances uterine contractility in response to oxytocin. Contributes to thymic atrophy by inducing apoptosis. Attenuates TNF-mediated endothelial expression of leukocyte adhesion molecules. Promotes neuritogenesis in developing hippocampal neurons. Plays a role in acute neuroprotection against NMDA-induced excitotoxic neuronal death. Increases firing activity and intracellular calcium oscillations in luteinizing hormone-releasing hormone (LHRH) neurons. Inhibits early osteoblast proliferation at growth plate during skeletal development. Inhibits mature adipocyte differentiation and lipid accumulation. Involved in the recruitment of beta-arrestin 2 ARRB2 at the plasma membrane in epithelial cells. Also functions as a receptor for aldosterone mediating rapid regulation of vascular contractibility through the PI3K/ERK signaling pathway. Involved in cancer progression regulation. Stimulates cancer-associated fibroblast (CAF) proliferation by a rapid genomic response through the EGFR/ERK transduction pathway. Associated with EGFR, may act as a transcription factor activating growth regulatory genes (c-fos, cyclin D1). Promotes integrin alpha-5/beta-1 and fibronectin (FN) matrix assembly in breast cancer cells. This is G-protein coupled estrogen receptor 1 (Gper1) from Mus musculus (Mouse).